Reading from the N-terminus, the 962-residue chain is Vacuolar membrane protease (962 aa).

The Cytoplasmic portion of the chain corresponds to 1–14 (MLAQFLRSLFRFRK). The helical transmembrane segment at 15 to 35 (TTVSVLLVATYVVVFLLNVWD) threads the bilayer. Topologically, residues 36-359 (RIRYQYSLPE…FVTASTKDLF (324 aa)) are vacuolar. A glycan (N-linked (GlcNAc...) asparagine) is linked at asparagine 118. Residues histidine 153 and aspartate 165 each contribute to the Zn(2+) site. The Proton acceptor role is filled by glutamate 197. Positions 198, 223, and 297 each coordinate Zn(2+). A helical transmembrane segment spans residues 360–380 (TLNCVVLSVIPVIILVLEFVI). Residues 381–390 (QRRKTRERNP) are Cytoplasmic-facing. A helical membrane pass occupies residues 391–411 (LLVWLRLPFSMFISYLVTATF). The Vacuolar segment spans residues 412–431 (RSSLFRVNPLIFSRDYVSPT). Residues 432–452 (IGFSFTFLILNYLVLSLLEYL) traverse the membrane as a helical segment. Over 453 to 460 (APSRDLKT) the chain is Cytoplasmic. The helical transmembrane segment at 461–481 (VSFVELFFGMWIALLWATIRL) threads the bilayer. Residues 482–489 (CTSKYTAT) are Vacuolar-facing. A helical membrane pass occupies residues 490–510 (GVYPITVLYLLMSFGAIVGLV). Topologically, residues 511–601 (CSAFKRKHSV…VVSALNYDWS (91 aa)) are cytoplasmic. Residues 531-554 (APNTYSSIEESPQQATNTEAPNEN) are compositionally biased toward polar residues. A disordered region spans residues 531–563 (APNTYSSIEESPQQATNTEAPNENSPEEHDERA). The helical transmembrane segment at 602-622 (VQFLAVVPLASFFVIMCLSLI) threads the bilayer. The Vacuolar segment spans residues 623 to 639 (LDGIYQTCQEGFQATWN). N-linked (GlcNAc...) asparagine glycosylation occurs at asparagine 639. The chain crosses the membrane as a helical span at residues 640–660 (VSKISMLGGMLLAIPVLPFCY). Residue lysine 661 is a topological domain, cytoplasmic. The chain crosses the membrane as a helical span at residues 662-682 (LNYFVSMVLLFAAASAGIFSF). Residues 683–962 (ERAPFTESSP…LVIVNDYIEL (280 aa)) are Vacuolar-facing. Residues asparagine 812 and asparagine 839 are each glycosylated (N-linked (GlcNAc...) asparagine).

This sequence belongs to the peptidase M28 family. Zn(2+) is required as a cofactor.

It is found in the vacuole membrane. In terms of biological role, may be involved in vacuolar sorting and osmoregulation. This is Vacuolar membrane protease from Lachancea thermotolerans (strain ATCC 56472 / CBS 6340 / NRRL Y-8284) (Yeast).